A 41-amino-acid polypeptide reads, in one-letter code: Alpha-1B-glycoprotein (41 aa).

N-linked (GlcNAc...) asparagine glycosylation is present at Asn-23.

As to quaternary structure, interacts with CRISP3. Glycosylated. In terms of tissue distribution, plasma.

The protein resides in the secreted. The sequence is that of Alpha-1B-glycoprotein (A1BG) from Equus caballus (Horse).